Reading from the N-terminus, the 590-residue chain is CTP synthase (590 aa).

The amidoligase domain stretch occupies residues 1 to 281 (MPALRKHPQT…DAYVVRRLNL (281 aa)). S23 contributes to the CTP binding site. A UTP-binding site is contributed by S23. ATP-binding positions include 24–29 (SLGKGL) and D81. 2 residues coordinate Mg(2+): D81 and E155. CTP is bound by residues 162–164 (DIE), 202–207 (KTKPTQ), and K238. UTP contacts are provided by residues 202–207 (KTKPTQ) and K238. In terms of domain architecture, Glutamine amidotransferase type-1 spans 306–554 (RIALVGKYID…IGAAIDYKAA (249 aa)). L-glutamine is bound at residue G369. C396 (nucleophile; for glutamine hydrolysis) is an active-site residue. Residues 397–400 (LGLQ), E419, and R480 contribute to the L-glutamine site. Residues H527 and E529 contribute to the active site.

It belongs to the CTP synthase family. In terms of assembly, homotetramer.

It carries out the reaction UTP + L-glutamine + ATP + H2O = CTP + L-glutamate + ADP + phosphate + 2 H(+). The enzyme catalyses L-glutamine + H2O = L-glutamate + NH4(+). It catalyses the reaction UTP + NH4(+) + ATP = CTP + ADP + phosphate + 2 H(+). It participates in pyrimidine metabolism; CTP biosynthesis via de novo pathway; CTP from UDP: step 2/2. Allosterically activated by GTP, when glutamine is the substrate; GTP has no effect on the reaction when ammonia is the substrate. The allosteric effector GTP functions by stabilizing the protein conformation that binds the tetrahedral intermediate(s) formed during glutamine hydrolysis. Inhibited by the product CTP, via allosteric rather than competitive inhibition. Functionally, catalyzes the ATP-dependent amination of UTP to CTP with either L-glutamine or ammonia as the source of nitrogen. Regulates intracellular CTP levels through interactions with the four ribonucleotide triphosphates. This chain is CTP synthase, found in Mycolicibacterium smegmatis (strain ATCC 700084 / mc(2)155) (Mycobacterium smegmatis).